Consider the following 1256-residue polypeptide: MSGVNVADLLATTMTLPITAAAGAATSQAAATSATNASHLQPATLTGHISTTAAAKTTTTPTSSLPITSQFVDASLTSLSLTATSSDASYSSPFSSYLSSDSTFELLSTVGPNITANGSDIAVDNQAELEESWLDLSLLLLKGFIFSSIILAAVLGNALVIISVQRNRKLRVITNYFVVSLAMADMLVALCAMTFNASVELSGGKWMFGPFMCNVYNSLDVYFSTASILHLCCISVDRYYAIVRPLEYPLNMTHKTVCFMLANVWILPALISFTPIFLGWYTTEEHLREISLHPDQCSFVVNKAYALISSSVSFWIPGIVMLVMYWRIFKEAIRQRKALSRTSSNILLNSVHMGHTQQPTSLSYLHPSDCDLNATSAREETHSALSNLEDMLQPATDEDDDRDECDELRVPSPPPRRLSRSSIDLRDLEQERYEKVTHTDSAPSMMALQQQQPSHNQLQPPAPVFNPQIWTEGKMIPSKELDKEHSHPNGPQQQLSLTSGSGNSEPEPESTAYRVFGGLNSDESEGNDLYDTHLPLAEDNKELKRLIEDNYLYFKRQTGGTIISGPGGGKYAALSETDFIRLKAGAAACGRKAFASSDSEFLRTISESRALPEQPVPGKEKGFNILSLLSKTKRSSTECFTLEKKRHQANSEGSSFFRRSRNRKLSHSYNGCGGGKERKLERRQRQHSDTDSTPNKPDILLDINVLSEQSGASVIQQFSDGVQLIDFSELKTPPERIRSDDELAQLADCFGESPQQPATPPPSLSPPELPEPSGLLIASSSELAEIFRSLSFPLGRPAGAPQRLSTLSDQVCANYLMSPPNTPAPPAISVPNGGAMDSSASSNAQSASINVYFLSPPPHAAAPGYTPSDTSTVSLDVVTSLPMPVPVPQPNPQMASQSNISPKPEIILDSTLSPVEGCGDEHRDVTSPLFKRKDSAGDADVSVSGNGGAGGVGGVGGRQGRCSILAGYDGIQTVRKRQASVVTYDVNVINFSQENSDSRSYIPMGRVSTSSAKHEFSNKSSLIRRGGICIFVDEEEAEIIEQRPRGITFAAVPSPLPKCPLCGADISSTTGTTANATATANADSTIDTTVTTSSKRSIHEQTPDLGQRPASSSSSTRFWHKRTAAVTACWQQSKNRKRRFKTGCSHCGATGGSVRPAKGWKAEHKAARTLGIIMGVFLLCWLPFFLWYVITSLCGPACPCPDVLVVVLFWIGYFNSTLNPLIYAYFNRDFREAFRNTLECVLPCLEKRNPYNAYYV.

At M1 to G143 the chain is on the extracellular side. N-linked (GlcNAc...) asparagine glycosylation is found at N36, N113, and N117. The chain crosses the membrane as a helical span at residues F144–V164. Residues Q165–R171 are Cytoplasmic-facing. A helical transmembrane segment spans residues V172 to A192. Residues M193–C213 are Extracellular-facing. A glycan (N-linked (GlcNAc...) asparagine) is linked at N196. A helical transmembrane segment spans residues N214–V236. The Cytoplasmic segment spans residues D237–C258. The helical transmembrane segment at F259–G279 threads the bilayer. The Extracellular segment spans residues W280–Y305. A helical membrane pass occupies residues A306–W326. At R327 to T1169 the chain is on the cytoplasmic side. Disordered stretches follow at residues A377–D427, E480–A512, L665–D698, G751–G774, and D1087–R1117. The span at T396 to D406 shows a compositional bias: acidic residues. Over residues N489 to T498 the composition is skewed to polar residues. A compositionally biased stretch (pro residues) spans P757–P770. Residues L1170–I1190 form a helical membrane-spanning segment. Residues T1191–D1202 lie on the Extracellular side of the membrane. A helical transmembrane segment spans residues V1203–Y1223. Topologically, residues A1224 to V1256 are cytoplasmic.

It belongs to the G-protein coupled receptor 1 family. As to expression, in the adult, expressed in the inferior and superior protocerebrum, the posterior lateral protocerebrum, the deutocerebrum, the surface of the subesophageal ganglion, the lateral cell body region, the cortical layer of the ventral nerve cord and the optic lobe medulla of the central nervous system (CNS). Also expressed in the nurse cells and follicle cells of the egg chambers in the ovary at oogenic stages 1-10, and spermatogonia and spermatocytes in the testis. Expressed ubiquitously in the embryonic CNS. In larvae, expressed in the ventral cortical layer of the ventral nerve cord, the cortical layer of the brain lobes, salivary glands, midgut, imaginal disks and developing reproductive organs. Expressed in the larval prothoracic gland with weak expression in other regions of the ring gland.

It localises to the cell membrane. In terms of biological role, autoreceptor for octopamine, which is a neurotransmitter, neurohormone, and neuromodulator in invertebrates. Probably also acts as a receptor for tyramine during ecdysone biosynthesis. Required for the biosynthesis of the steroid hormone ecdysone which is necessary for metamorphosis. Involved in activation of prothoracicotropic hormone and insulin-like peptide signaling which is required for the expression of ecdysone biosynthetic genes. This is Octopamine receptor beta-3R from Drosophila melanogaster (Fruit fly).